The sequence spans 270 residues: Diaminopimelate epimerase (270 aa).

Asn15, Gln49, and Asn66 together coordinate substrate. Cys75 (proton donor) is an active-site residue. Substrate is bound by residues 76-77, Asn155, Asn187, and 204-205; these read GN and ER. Cys213 functions as the Proton acceptor in the catalytic mechanism. Substrate is bound at residue 214 to 215; the sequence is GS.

This sequence belongs to the diaminopimelate epimerase family. Homodimer.

It is found in the cytoplasm. It carries out the reaction (2S,6S)-2,6-diaminopimelate = meso-2,6-diaminopimelate. Its pathway is amino-acid biosynthesis; L-lysine biosynthesis via DAP pathway; DL-2,6-diaminopimelate from LL-2,6-diaminopimelate: step 1/1. Functionally, catalyzes the stereoinversion of LL-2,6-diaminopimelate (L,L-DAP) to meso-diaminopimelate (meso-DAP), a precursor of L-lysine and an essential component of the bacterial peptidoglycan. The chain is Diaminopimelate epimerase from Rickettsia prowazekii (strain Madrid E).